We begin with the raw amino-acid sequence, 29 residues long: Alpha-amylase inhibitor 2 (29 aa).

It belongs to the protease inhibitor I6 (cereal trypsin/alpha-amylase inhibitor) family.

Its subcellular location is the secreted. Alpha-amylase inhibitor. This is Alpha-amylase inhibitor 2 from Saussurea costus (Costus).